Consider the following 431-residue polypeptide: Histidine--tRNA ligase (431 aa).

The protein belongs to the class-II aminoacyl-tRNA synthetase family.

Its subcellular location is the cytoplasm. The catalysed reaction is tRNA(His) + L-histidine + ATP = L-histidyl-tRNA(His) + AMP + diphosphate + H(+). This Pyrococcus horikoshii (strain ATCC 700860 / DSM 12428 / JCM 9974 / NBRC 100139 / OT-3) protein is Histidine--tRNA ligase (hisS).